Consider the following 96-residue polypeptide: ASNSD1 upstream open reading frame protein (96 aa).

Residues 1–10 (MPSRGTRPED) show a composition bias toward basic and acidic residues. A disordered region spans residues 1 to 28 (MPSRGTRPEDSSVLIPTDNSTPHKEDLS). A coiled-coil region spans residues 23–96 (HKEDLSSKIK…ENLDKTKIKK (74 aa)).

Component of the PAQosome complex which is responsible for the biogenesis of several protein complexes and which consists of R2TP complex members RUVBL1, RUVBL2, RPAP3 and PIH1D1, URI complex members PFDN2, PFDN6, PDRG1, UXT and URI1 as well as ASDURF, POLR2E and DNAAF10/WDR92.

It localises to the cytoplasm. This chain is ASNSD1 upstream open reading frame protein, found in Homo sapiens (Human).